A 207-amino-acid polypeptide reads, in one-letter code: MALHMILVMVSLLPLLEAQNPEHVNITIGDPITNETLSWLSDKWFFIGAAVLNPDYRQEIQKTQMVFFNLTPNLINDTMELREYHTIDDHCVYNSTHLGIQRENGTLSKYVGGVKIFADLIVLKMHGAFMLAFDLKDEKKRGLSLNAKRPDITPELREVFQKAVTHVGMDESEIIFVDWKKDRCSQQEKQQLELEKETKKDPEEGQA.

Residues methionine 1–alanine 18 form the signal peptide. Pyrrolidone carboxylic acid is present on glutamine 19. N-linked (GlcNAc...) asparagine glycosylation is found at asparagine 25, asparagine 34, asparagine 76, asparagine 94, and asparagine 104. Cysteine 91 and cysteine 184 are joined by a disulfide. Residues glutamate 188–alanine 207 are disordered.

This sequence belongs to the calycin superfamily. Lipocalin family. Expressed by the liver and secreted in plasma.

The protein localises to the secreted. Functions as a transport protein in the blood stream. Binds various ligands in the interior of its beta-barrel domain. Appears to function in modulating the activity of the immune system during the acute-phase reaction. The polypeptide is Alpha-1-acid glycoprotein 2 (Orm2) (Mus musculus (Mouse)).